Consider the following 372-residue polypeptide: DNA replication and repair protein RecF (372 aa).

Residue 30–37 (GENGQGKT) participates in ATP binding.

The protein belongs to the RecF family.

Its subcellular location is the cytoplasm. In terms of biological role, the RecF protein is involved in DNA metabolism; it is required for DNA replication and normal SOS inducibility. RecF binds preferentially to single-stranded, linear DNA. It also seems to bind ATP. The protein is DNA replication and repair protein RecF of Anaeromyxobacter dehalogenans (strain 2CP-C).